Consider the following 388-residue polypeptide: MKNKDYPLRSSMDELSTKNDNEIDLEKGPLPEYNSEDGSTLPPYSEIWKYIKTVSEDSSTGPTEIANPNVERRQEFKDSHPNIYSLLRLLISVLAVIVVFFTAWVCVNPLEKSIFGKVAFSVTIGITCPIVFIAIFCFFETWTQAVAQCIKVTVIFLAQCVKVTAISLAQCVKVTAVFLAKCVKVTAVFLAKCVKVIAVGLYNSKKDLVVTIWLAWVVICFILFGCVKDGRLNLNKALICSTCSISAALFFILLLVCIPIWTLKHMLFGLFQVLGVQSCVVIVTKGLMYLFDKHIDATGYEIEASSLFVIGNFLFFYEMERPGALKRMPKFIGNGIASFLGGLGNAFGGIGNAFGGIGNAIGRIGNAFRGANDNNDIPLGEMDVESEV.

Over residues 1 to 29 (MKNKDYPLRSSMDELSTKNDNEIDLEKGP) the composition is skewed to basic and acidic residues. The interval 1–39 (MKNKDYPLRSSMDELSTKNDNEIDLEKGPLPEYNSEDGS) is disordered. Helical transmembrane passes span 89 to 109 (LLISVLAVIVVFFTAWVCVNP), 119 to 139 (AFSVTIGITCPIVFIAIFCFF), 152 to 172 (VTVIFLAQCVKVTAISLAQCV), 182 to 202 (CVKVTAVFLAKCVKVIAVGLY), 207 to 227 (DLVVTIWLAWVVICFILFGCV), 243 to 263 (CSISAALFFILLLVCIPIWTL), 267 to 287 (LFGLFQVLGVQSCVVIVTKGL), 297 to 317 (ATGYEIEASSLFVIGNFLFFY), and 331 to 351 (FIGNGIASFLGGLGNAFGGIG).

This sequence belongs to the WTF family. Homomer. Forms protein aggregates. The two isoforms can interact with each other and with themselves. High sequence similarity is required for their interaction.

The protein resides in the spore membrane. It is found in the vacuole membrane. Its subcellular location is the ascus epiplasm. It localises to the cytoplasm. The protein localises to the endoplasmic reticulum membrane. In terms of biological role, promotes unequal transmission of alleles from the parental zygote to progeny spores by acting as poison/antidote system where the poison and antidote proteins are produced from the same locus; the poison component is trans-acting and targets all spores within an ascus whereas the antidote component is spore-specific, leading to poisoning of all progeny that do not inherit the allele. Functionally, localizes isoform 2 to the vacuole thereby facilitating its degradation. In addition to suppressing isoform 2, also suppresses S.pombe strain FY29033 wtf18 isoform 2. Forms toxic aggregates that disrupt spore maturation. The polypeptide is Meiotic driver wtf13 (Schizosaccharomyces pombe (strain 972 / ATCC 24843) (Fission yeast)).